The primary structure comprises 301 residues: DSC E3 ubiquitin ligase complex subunit B (301 aa).

The next 3 helical transmembrane spans lie at 9-29, 52-72, and 90-110; these read APITKLLLIYTIASSIALSIL, LATWQLAGFTNSTEALFAAML, and TFIISTLPYTSLLPPLLLVLL. The span at 268–284 shows a compositional bias: low complexity; it reads AAAAASGNAGSASEASG. The tract at residues 268–301 is disordered; the sequence is AAAAASGNAGSASEASGQRQRRREGGIMDRLRAL. Positions 290–301 are enriched in basic and acidic residues; it reads REGGIMDRLRAL.

In terms of assembly, component of the DSC E3 ubiquitin ligase complex composed of dscA, dscB, dscC and dscD.

The protein localises to the endoplasmic reticulum membrane. The catalysed reaction is S-ubiquitinyl-[E2 ubiquitin-conjugating enzyme]-L-cysteine + [acceptor protein]-L-lysine = [E2 ubiquitin-conjugating enzyme]-L-cysteine + N(6)-ubiquitinyl-[acceptor protein]-L-lysine.. It participates in protein modification; protein ubiquitination. Component of the DSC E3 ubiquitin ligase complex which is required for the srbA transcriptional activator proteolytic cleavage to release the soluble transcription factor from the membrane in low oxygen or sterol conditions. Required for growth during hypoxia and triazole drug susceptibility, as well as for virulence in a murine model of invasive pulmonary aspergillosis (IPA). The sequence is that of DSC E3 ubiquitin ligase complex subunit B from Aspergillus fumigatus (strain ATCC MYA-4609 / CBS 101355 / FGSC A1100 / Af293) (Neosartorya fumigata).